A 2492-amino-acid chain; its full sequence is Transcriptional regulator ATRX (2492 aa).

A disordered region spans residues 1–147 (MTAEPMSESK…KDDFKGPEFR (147 aa)). A Glycyl lysine isopeptide (Lys-Gly) (interchain with G-Cter in SUMO2) cross-link involves residue K10. A compositionally biased stretch (basic and acidic residues) spans 17 to 27 (KLHDFLAHSSE). 2 positions are modified to phosphoserine: S25 and S34. Residues 40–57 (MNQNTDKISGSGSNSDMM) are compositionally biased toward polar residues. Basic and acidic residues predominate over residues 58–72 (ENSKEEGTSSSEKSK). Y89 bears the Phosphotyrosine mark. Residues S92 and S112 each carry the phosphoserine modification. A compositionally biased stretch (acidic residues) spans 92–108 (SDDEKPLDDETVNEDAS). The segment covering 135 to 147 (NEDKDDFKGPEFR) has biased composition (basic and acidic residues). Glycyl lysine isopeptide (Lys-Gly) (interchain with G-Cter in SUMO2) cross-links involve residues K138 and K142. In terms of domain architecture, ADD spans 159–296 (KRGEDGLHGI…LEQLLQQNKK (138 aa)). Residues 170–206 (SCTACGQQVNHFQKDSIYRHPSLQVLICKNCFKYYMS) form a GATA-type; atypical zinc finger. A Phosphoserine modification is found at S213. The PHD-type; atypical zinc finger occupies 217–272 (DEQCRWCAEGGNLICCDFCHNAFCKKCILRNLGRKELSTIMDENNQWYCYICHPEP). A Glycyl lysine isopeptide (Lys-Gly) (interchain with G-Cter in SUMO2) cross-link involves residue K299. The residue at position 316 (S316) is a Phosphoserine. Residue K438 forms a Glycyl lysine isopeptide (Lys-Gly) (interchain with G-Cter in SUMO2) linkage. A compositionally biased stretch (basic and acidic residues) spans 445–502 (KGEKPCALEKKDISKSEAKLSRKQVDSEHMHQNVPTEEQRTNKSTGGEHKKSDRKEEP). Disordered stretches follow at residues 445–516 (KGEK…LDMD) and 535–576 (AMEV…GIKS). The segment covering 550–567 (SGTEQEVESSSVKLNISS) has biased composition (polar residues). A PxVxL motif motif is present at residues 581–594 (KVTKELYVKLTPVS). T591 bears the Phosphothreonine mark. Residues 593–616 (VSLSNSPIKGADCQEVPQDKDGYK) form a disordered region. 2 positions are modified to phosphoserine: S594 and S598. A Glycyl lysine isopeptide (Lys-Gly) (interchain with G-Cter in SUMO1); alternate cross-link involves residue K623. A Glycyl lysine isopeptide (Lys-Gly) (interchain with G-Cter in SUMO2); alternate cross-link involves residue K623. At S634 the chain carries Phosphoserine. Positions 649-956 (EESDLRRSPR…KHLKTKTCKK (308 aa)) are disordered. T674 is modified (phosphothreonine). Residues S675, S677, S729, and S731 each carry the phosphoserine modification. Residues 755–777 (NEIHTNHKTLYDLKTQAGKDDKG) show a composition bias toward basic and acidic residues. Residues S784, S819, S849, S850, S875, and S876 each carry the phosphoserine modification. Positions 843-864 (NTKDFDSSEDEKHSKKGMDNQG) are enriched in basic and acidic residues. Residues 878 to 887 (DAERKQERET) show a composition bias toward basic and acidic residues. Position 889 is a phosphoserine (S889). 2 stretches are compositionally biased toward basic and acidic residues: residues 894 to 909 (TVDK…DRLP) and 920 to 944 (GVDK…ETKE). Residues 945-955 (KSKHLKTKTCK) show a composition bias toward basic residues. The residue at position 962 (S962) is a Phosphoserine. K967 is subject to N6-acetyllysine. The segment covering 968-1004 (FLKKDQSDETSEDDKKQSKKGTEEKKKPSDFKKKVIK) has biased composition (basic and acidic residues). Positions 968–1479 (FLKKDQSDET…SKSPGKGRKK (512 aa)) are disordered. A Phosphoserine modification is found at S974. T977 carries the post-translational modification Phosphothreonine. K1004 participates in a covalent cross-link: Glycyl lysine isopeptide (Lys-Gly) (interchain with G-Cter in SUMO2). Phosphoserine occurs at positions 1011, 1012, and 1013. Residues 1015 to 1027 (GTEKLPEREEICH) show a composition bias toward basic and acidic residues. The span at 1045-1055 (KSKKIRDKTSK) shows a compositional bias: basic residues. Over residues 1056–1082 (KKDELSDYAEKSTGKGDSCDSSEDKKS) the composition is skewed to basic and acidic residues. S1061 is modified (phosphoserine). Y1063 carries the post-translational modification Phosphotyrosine. Residues 1090-1102 (EKKRCKLLGKSSR) show a composition bias toward basic residues. Basic and acidic residues predominate over residues 1103–1139 (KRQDCSSSDTEKYSMKEDGCNSSDKRLKRIELRERRN). The span at 1167 to 1195 (KKKQRTSSKKKAVIVKEKKRNSLRTSTKR) shows a compositional bias: basic residues. Residues 1189–1326 (LRTSTKRKQA…KNQVNSESDS (138 aa)) are interaction with DAXX. The segment covering 1233–1246 (LVLSSHTGFCQSSG) has biased composition (polar residues). Residues S1244, S1245, and S1253 each carry the phosphoserine modification. A compositionally biased stretch (basic and acidic residues) spans 1267–1281 (PENRIAKKMLLEEIK). The segment covering 1286-1297 (SDEDGSSDDEPE) has biased composition (acidic residues). Over residues 1298–1308 (EGKKRTGKQNE) the composition is skewed to basic and acidic residues. Phosphoserine occurs at positions 1322, 1324, and 1326. Basic residues predominate over residues 1334-1345 (PRYRHRLLRHKL). Residues S1348 and S1352 each carry the phosphoserine modification. Composition is skewed to basic and acidic residues over residues 1353–1368 (GEEK…EVKG) and 1408–1417 (KKAELEENQR). Residues 1419 to 1428 (YKQKKKRRRI) show a composition bias toward basic residues. Positions 1443 to 1468 (EEEEEEKEEEEEEEEEEEEEEEDEND) are enriched in acidic residues. K1488 participates in a covalent cross-link: Glycyl lysine isopeptide (Lys-Gly) (interchain with G-Cter in SUMO2). S1527 carries the post-translational modification Phosphoserine. Phosphothreonine is present on T1529. The 188-residue stretch at 1581–1768 (KTKKSPGSGC…HCMVNFIKEN (188 aa)) folds into the Helicase ATP-binding domain. 1594–1601 (HCMGLGKT) provides a ligand contact to ATP. The short motif at 1719–1722 (DEGH) is the DEGH box element. Residues S1906 and S1913 each carry the phosphoserine modification. Residues 1913–2000 (SDSDETSMSL…SSNPSSPAPD (88 aa)) form a disordered region. Residues 1929 to 1938 (KKKKKGKKGK) show a composition bias toward basic residues. A Glycyl lysine isopeptide (Lys-Gly) (interchain with G-Cter in SUMO1); alternate cross-link involves residue K1982. K1982 is covalently cross-linked (Glycyl lysine isopeptide (Lys-Gly) (interchain with G-Cter in SUMO2); alternate). K1987 is covalently cross-linked (Glycyl lysine isopeptide (Lys-Gly) (interchain with G-Cter in SUMO2)). The segment covering 1990-1999 (SSSNPSSPAP) has biased composition (low complexity). S1992 and S1996 each carry phosphoserine. Residues 2010 to 2280 (DAEVLEHSGK…RKAAWAEYEA (271 aa)) form an interaction with MECP2 region. The region spanning 2025–2205 (EILRMAEEIG…ERHFTMNELT (181 aa)) is the Helicase C-terminal domain. The residue at position 2220 (S2220) is a Phosphoserine. Residues 2462–2492 (PVAGGMQPPPLQRAPPPMRSKNPGPSQGKSM) form a disordered region. A compositionally biased stretch (pro residues) spans 2468–2479 (QPPPLQRAPPPM). Omega-N-methylarginine is present on residues R2474 and R2480.

This sequence belongs to the SNF2/RAD54 helicase family. In terms of assembly, interacts with DAXX to form the chromatin remodeling complex ATRX:DAXX. Probably binds EZH2. Binds annexin V in a calcium and phosphatidylcholine/phosphatidylserine-dependent manner. Interacts directly with CBX5 via the PxVxL motif. Interacts with RAD50, MRE11 and NBN; indicative for an association with the MRN complex. Interacts with histone MACROH2A1. Interacts with histone H3 peptides methylated at 'Lys-10' with preferences H3K9me3 &gt; H3K9me2 &gt; H3K9me1. Interacts with histone H3 peptides unmethylated at 'Lys-5' (H3K4me0). Interacts with MECP2, SMC1 and SMC3. Interacts with SETDB1, TRIM28 and ZNF274. Post-translationally, phosphorylated at serine residues during mitose. Phosphorylation may promote the release from the nuclear matrix and progression to mitosis. In terms of tissue distribution, ubiquitous.

The protein localises to the nucleus. Its subcellular location is the chromosome. It localises to the telomere. The protein resides in the PML body. It carries out the reaction ATP + H2O = ADP + phosphate + H(+). Functionally, involved in transcriptional regulation and chromatin remodeling. Facilitates DNA replication in multiple cellular environments and is required for efficient replication of a subset of genomic loci. Binds to DNA tandem repeat sequences in both telomeres and euchromatin and in vitro binds DNA quadruplex structures. May help stabilizing G-rich regions into regular chromatin structures by remodeling G4 DNA and incorporating H3.3-containing nucleosomes. Catalytic component of the chromatin remodeling complex ATRX:DAXX which has ATP-dependent DNA translocase activity and catalyzes the replication-independent deposition of histone H3.3 in pericentric DNA repeats outside S-phase and telomeres, and the in vitro remodeling of H3.3-containing nucleosomes. Its heterochromatin targeting is proposed to involve a combinatorial readout of histone H3 modifications (specifically methylation states of H3K9 and H3K4) and association with CBX5. Involved in maintaining telomere structural integrity in embryonic stem cells which probably implies recruitment of CBX5 to telomeres. Reports on the involvement in transcriptional regulation of telomeric repeat-containing RNA (TERRA) are conflicting; according to a report, it is not sufficient to decrease chromatin condensation at telomeres nor to increase expression of telomeric RNA in fibroblasts. May be involved in telomere maintenance via recombination in ALT (alternative lengthening of telomeres) cell lines. Acts as a negative regulator of chromatin incorporation of transcriptionally repressive histone MACROH2A1, particularily at telomeres and the alpha-globin cluster in erythroleukemic cells. Participates in the allele-specific gene expression at the imprinted IGF2/H19 gene locus. On the maternal allele, required for the chromatin occupancy of SMC1 and CTCTF within the H19 imprinting control region (ICR) and involved in esatblishment of histone tails modifications in the ICR. May be involved in brain development and facial morphogenesis. Binds to zinc-finger coding genes with atypical chromatin signatures and regulates its H3K9me3 levels. Forms a complex with ZNF274, TRIM28 and SETDB1 to facilitate the deposition and maintenance of H3K9me3 at the 3' exons of zinc-finger genes. The polypeptide is Transcriptional regulator ATRX (ATRX) (Homo sapiens (Human)).